Reading from the N-terminus, the 1802-residue chain is U3 small nucleolar RNA-associated protein 10 (1802 aa).

An HEAT 1 repeat occupies 581-618 (MDLQALLPFVLVTLADPSERVRREAAGILTIIGSLHKN). 2 helical membrane passes run 946-966 (VQSG…AIVN) and 1002-1022 (ALLL…HSVM). HEAT repeat units lie at residues 1046–1083 (QTID…AFEH), 1253–1290 (LSLV…QNPE), 1297–1335 (TRML…KYGK), and 1758–1795 (ALLP…VLGE).

It belongs to the HEATR1/UTP10 family. As to quaternary structure, component of the ribosomal small subunit (SSU) processome.

The protein resides in the nucleus. The protein localises to the nucleolus. It is found in the membrane. In terms of biological role, involved in nucleolar processing of pre-18S ribosomal RNA. Involved in ribosome biosynthesis. The chain is U3 small nucleolar RNA-associated protein 10 from Aspergillus oryzae (strain ATCC 42149 / RIB 40) (Yellow koji mold).